The primary structure comprises 89 residues: Small ribosomal subunit protein bS16 (89 aa).

This sequence belongs to the bacterial ribosomal protein bS16 family.

This chain is Small ribosomal subunit protein bS16, found in Gloeobacter violaceus (strain ATCC 29082 / PCC 7421).